A 211-amino-acid polypeptide reads, in one-letter code: uncharacterized protein (211 aa).

It belongs to the nucleoside deoxyribosyltransferase family.

The protein resides in the cytoplasm. It is found in the nucleus. This is an uncharacterized protein from Schizosaccharomyces pombe (strain 972 / ATCC 24843) (Fission yeast).